Consider the following 570-residue polypeptide: Putative ABC transporter ATP-binding protein SACOL2708 (570 aa).

ABC transporter domains follow at residues 6–247 and 304–537; these read ISFK…GIRE and LELN…ASLR. Residues 40-47 and 338-345 contribute to the ATP site; these read GASGSGKS and GHNGAGKS.

Belongs to the ABC transporter superfamily.

Its subcellular location is the cell membrane. In terms of biological role, probably part of an ABC transporter complex. Responsible for energy coupling to the transport system. This Staphylococcus aureus (strain COL) protein is Putative ABC transporter ATP-binding protein SACOL2708.